The primary structure comprises 977 residues: Probable RNA-dependent RNA polymerase 5 (977 aa).

The disordered stretch occupies residues 103-122 (EEMSVDSDAPSPKSLKSEDK).

This sequence belongs to the RdRP family.

The catalysed reaction is RNA(n) + a ribonucleoside 5'-triphosphate = RNA(n+1) + diphosphate. Its function is as follows. Probably involved in the RNA silencing pathway and required for the generation of small interfering RNAs (siRNAs). The polypeptide is Probable RNA-dependent RNA polymerase 5 (RDR5) (Arabidopsis thaliana (Mouse-ear cress)).